The sequence spans 324 residues: Probable cell division protein WhiA (324 aa).

Residues 275 to 308 (SLEELGALADPPLTKDAIAGRIRRLIAMADRRAD) constitute a DNA-binding region (H-T-H motif).

Belongs to the WhiA family.

Its function is as follows. Involved in cell division and chromosome segregation. This chain is Probable cell division protein WhiA, found in Acidothermus cellulolyticus (strain ATCC 43068 / DSM 8971 / 11B).